The following is a 347-amino-acid chain: Olfactory receptor 1L6 (347 aa).

The Extracellular portion of the chain corresponds to M1–K62. The N-linked (GlcNAc...) asparagine glycan is linked to N41. The chain crosses the membrane as a helical span at residues P63–I86. Residues Y87–T94 lie on the Cytoplasmic side of the membrane. The helical transmembrane segment at P95–P116 threads the bilayer. The Extracellular segment spans residues K117–Q137. A disulfide bridge connects residues C134 and C226. The helical transmembrane segment at M138–I157 threads the bilayer. The Cytoplasmic segment spans residues D158–R176. Residues H177–F195 traverse the membrane as a helical segment. Residues R196–Q233 are Extracellular-facing. Residues M234 to L256 form a helical membrane-spanning segment. The Cytoplasmic portion of the chain corresponds to R257–K273. The chain crosses the membrane as a helical span at residues A274–Y296. At F297–R309 the chain is on the extracellular side. A helical membrane pass occupies residues V310 to L329. At R330–R347 the chain is on the cytoplasmic side.

It belongs to the G-protein coupled receptor 1 family.

It localises to the cell membrane. Its function is as follows. Odorant receptor. The chain is Olfactory receptor 1L6 (OR1L6) from Homo sapiens (Human).